A 466-amino-acid polypeptide reads, in one-letter code: Asparagine--tRNA ligase (466 aa).

The protein belongs to the class-II aminoacyl-tRNA synthetase family. Homodimer.

It localises to the cytoplasm. The catalysed reaction is tRNA(Asn) + L-asparagine + ATP = L-asparaginyl-tRNA(Asn) + AMP + diphosphate + H(+). The sequence is that of Asparagine--tRNA ligase from Colwellia psychrerythraea (strain 34H / ATCC BAA-681) (Vibrio psychroerythus).